A 481-amino-acid polypeptide reads, in one-letter code: tRNA:m(4)X modification enzyme TRM13 homolog (481 aa).

The segment at 56–83 adopts a CHHC U11-48K-type zinc-finger fold; sequence RILCPLDPKHTVYEDQLAKHLKKCNSRE. 4 residues coordinate Zn(2+): C59, H65, H75, and C79. The stretch at 113–140 forms a coiled coil; that stretch reads SLSEEQLENLIKKLRKASEGLNSTHEDH. 2 disordered regions span residues 296–319 and 379–414; these read AKRI…SEKD and LEGS…TDSL. A compositionally biased stretch (basic and acidic residues) spans 385-407; the sequence is TPERKDAQRDENEEHDDGGDRLT.

Belongs to the methyltransferase TRM13 family.

The enzyme catalyses cytidine(4) in tRNA(Pro) + S-adenosyl-L-methionine = 2'-O-methylcytidine(4) in tRNA(Pro) + S-adenosyl-L-homocysteine + H(+). It carries out the reaction cytidine(4) in tRNA(Gly)(GCC) + S-adenosyl-L-methionine = 2'-O-methylcytidine(4) in tRNA(Gly)(GCC) + S-adenosyl-L-homocysteine + H(+). It catalyses the reaction adenosine(4) in tRNA(His) + S-adenosyl-L-methionine = 2'-O-methyladenosine(4) in tRNA(His) + S-adenosyl-L-homocysteine + H(+). Functionally, tRNA methylase which 2'-O-methylates cytidine(4) in tRNA(Pro) and tRNA(Gly)(GCC), and adenosine(4) in tRNA(His). This is tRNA:m(4)X modification enzyme TRM13 homolog (Trmt13) from Mus musculus (Mouse).